Reading from the N-terminus, the 247-residue chain is Putative methyltransferase GWCH70_2453 (247 aa).

Belongs to the methyltransferase superfamily.

Its function is as follows. May be a S-adenosyl-L-methionine (SAM)-dependent methyltransferase. In Geobacillus sp. (strain WCH70), this protein is Putative methyltransferase GWCH70_2453.